The primary structure comprises 122 residues: Large ribosomal subunit protein uL14 (122 aa).

The protein belongs to the universal ribosomal protein uL14 family. In terms of assembly, part of the 50S ribosomal subunit. Forms a cluster with proteins L3 and L19. In the 70S ribosome, L14 and L19 interact and together make contacts with the 16S rRNA in bridges B5 and B8.

Its function is as follows. Binds to 23S rRNA. Forms part of two intersubunit bridges in the 70S ribosome. This Magnetococcus marinus (strain ATCC BAA-1437 / JCM 17883 / MC-1) protein is Large ribosomal subunit protein uL14.